The following is a 486-amino-acid chain: Cardiolipin synthase A (486 aa).

The next 2 membrane-spanning stretches (helical) occupy residues 3 to 23 and 38 to 58; these read TFYT…IASV and MAWL…YLSF. PLD phosphodiesterase domains are found at residues 219 to 246 and 399 to 426; these read MDLR…VDPR and EGGL…DMRS. Catalysis depends on residues histidine 224, lysine 226, aspartate 231, histidine 404, lysine 406, and aspartate 411.

The protein belongs to the phospholipase D family. Cardiolipin synthase subfamily. ClsA sub-subfamily.

Its subcellular location is the cell inner membrane. It carries out the reaction 2 a 1,2-diacyl-sn-glycero-3-phospho-(1'-sn-glycerol) = a cardiolipin + glycerol. Functionally, catalyzes the reversible phosphatidyl group transfer from one phosphatidylglycerol molecule to another to form cardiolipin (CL) (diphosphatidylglycerol) and glycerol. The protein is Cardiolipin synthase A of Edwardsiella ictaluri (strain 93-146).